The chain runs to 293 residues: 4-diphosphocytidyl-2-C-methyl-D-erythritol kinase (293 aa).

The active site involves Lys-11. Position 96–106 (96–106) interacts with ATP; sequence PVAAGLGGGSS. Asp-138 is an active-site residue.

This sequence belongs to the GHMP kinase family. IspE subfamily.

It carries out the reaction 4-CDP-2-C-methyl-D-erythritol + ATP = 4-CDP-2-C-methyl-D-erythritol 2-phosphate + ADP + H(+). It participates in isoprenoid biosynthesis; isopentenyl diphosphate biosynthesis via DXP pathway; isopentenyl diphosphate from 1-deoxy-D-xylulose 5-phosphate: step 3/6. Catalyzes the phosphorylation of the position 2 hydroxy group of 4-diphosphocytidyl-2C-methyl-D-erythritol. In Xanthobacter autotrophicus (strain ATCC BAA-1158 / Py2), this protein is 4-diphosphocytidyl-2-C-methyl-D-erythritol kinase.